The primary structure comprises 276 residues: Large ribosomal subunit protein uL2 (276 aa).

2 disordered regions span residues 38–59 (FQKSGRNNNGHITTRHKGGGHK) and 225–276 (VMNP…RHKR). Positions 39-49 (QKSGRNNNGHI) are enriched in polar residues. The segment covering 50–59 (TTRHKGGGHK) has biased composition (basic residues).

Belongs to the universal ribosomal protein uL2 family. In terms of assembly, part of the 50S ribosomal subunit. Forms a bridge to the 30S subunit in the 70S ribosome.

In terms of biological role, one of the primary rRNA binding proteins. Required for association of the 30S and 50S subunits to form the 70S ribosome, for tRNA binding and peptide bond formation. It has been suggested to have peptidyltransferase activity; this is somewhat controversial. Makes several contacts with the 16S rRNA in the 70S ribosome. The sequence is that of Large ribosomal subunit protein uL2 from Cupriavidus necator (strain ATCC 17699 / DSM 428 / KCTC 22496 / NCIMB 10442 / H16 / Stanier 337) (Ralstonia eutropha).